Here is a 277-residue protein sequence, read N- to C-terminus: Myelin proteolipid protein (277 aa).

Residues 1–10 lie on the Cytoplasmic side of the membrane; it reads MGLLECCARC. 3 S-palmitoyl cysteine lipidation sites follow: cysteine 6, cysteine 7, and cysteine 10. The helical transmembrane segment at 11–36 threads the bilayer; it reads LVGAPFASLVATGLCFFGVALFCGCG. The Extracellular portion of the chain corresponds to 37–59; it reads HEALTGTEKLIETYFSKNYQDYE. The chain crosses the membrane as a helical span at residues 60–88; that stretch reads YLINVIHAFQYVIYGTASFFFLYGALLLA. Over 89 to 151 the chain is Cytoplasmic; it reads EGFYTTGAVR…LGKWLGHPDK (63 aa). Cysteine 109 carries S-palmitoyl cysteine lipidation. Serine 114 bears the Phosphoserine mark. Phosphothreonine occurs at positions 116 and 118. Residue cysteine 141 is the site of S-palmitoyl cysteine attachment. Residues 152–178 traverse the membrane as a helical segment; it reads FVGITYALTVVWLLVFACSAVPVYIYF. At 179-238 the chain is on the extracellular side; the sequence is NTWTTCQSIAFPSKTSASIGSLCADARMYGVLPWNAFPGKVCGSNLLSICKTAEFQMTFH. Intrachain disulfides connect cysteine 184–cysteine 228 and cysteine 201–cysteine 220. Serine 199 carries the O-palmitoyl serine lipid modification. A helical membrane pass occupies residues 239-268; sequence LFIAAFVGAAATLISLLTFMIAATYNFAVL. Over 269-277 the chain is Cytoplasmic; sequence KLMGRGTKF.

It belongs to the myelin proteolipid protein family.

The protein localises to the cell membrane. It localises to the myelin membrane. Its function is as follows. This is the major myelin protein from the central nervous system. It plays an important role in the formation or maintenance of the multilamellar structure of myelin. The sequence is that of Myelin proteolipid protein (PLP1) from Macaca fascicularis (Crab-eating macaque).